The sequence spans 296 residues: Phosphatidylserine decarboxylase proenzyme (296 aa).

Active-site charge relay system; for autoendoproteolytic cleavage activity residues include Asp113, His169, and Ser256. Ser256 serves as the catalytic Schiff-base intermediate with substrate; via pyruvic acid; for decarboxylase activity. Ser256 bears the Pyruvic acid (Ser); by autocatalysis mark.

This sequence belongs to the phosphatidylserine decarboxylase family. PSD-B subfamily. Prokaryotic type II sub-subfamily. Heterodimer of a large membrane-associated beta subunit and a small pyruvoyl-containing alpha subunit. Requires pyruvate as cofactor. Post-translationally, is synthesized initially as an inactive proenzyme. Formation of the active enzyme involves a self-maturation process in which the active site pyruvoyl group is generated from an internal serine residue via an autocatalytic post-translational modification. Two non-identical subunits are generated from the proenzyme in this reaction, and the pyruvate is formed at the N-terminus of the alpha chain, which is derived from the carboxyl end of the proenzyme. The autoendoproteolytic cleavage occurs by a canonical serine protease mechanism, in which the side chain hydroxyl group of the serine supplies its oxygen atom to form the C-terminus of the beta chain, while the remainder of the serine residue undergoes an oxidative deamination to produce ammonia and the pyruvoyl prosthetic group on the alpha chain. During this reaction, the Ser that is part of the protease active site of the proenzyme becomes the pyruvoyl prosthetic group, which constitutes an essential element of the active site of the mature decarboxylase.

It localises to the cell membrane. It catalyses the reaction a 1,2-diacyl-sn-glycero-3-phospho-L-serine + H(+) = a 1,2-diacyl-sn-glycero-3-phosphoethanolamine + CO2. It participates in phospholipid metabolism; phosphatidylethanolamine biosynthesis; phosphatidylethanolamine from CDP-diacylglycerol: step 2/2. In terms of biological role, catalyzes the formation of phosphatidylethanolamine (PtdEtn) from phosphatidylserine (PtdSer). This chain is Phosphatidylserine decarboxylase proenzyme, found in Clostridium kluyveri (strain ATCC 8527 / DSM 555 / NBRC 12016 / NCIMB 10680 / K1).